We begin with the raw amino-acid sequence, 370 residues long: Chaperone protein DnaJ (370 aa).

The 65-residue stretch at 6–70 (DYYEVLGVQR…EKRSMYDRFG (65 aa)) folds into the J domain. The CR-type zinc finger occupies 128 to 208 (GVEKTIEFRR…CRGEGRVRQT (81 aa)). 8 residues coordinate Zn(2+): Cys141, Cys144, Cys158, Cys161, Cys182, Cys185, Cys196, and Cys199. CXXCXGXG motif repeat units follow at residues 141-148 (CPACRGSG), 158-165 (CPKCGGLG), 182-189 (CDMCRGEG), and 196-203 (CRECRGEG).

Belongs to the DnaJ family. In terms of assembly, homodimer. The cofactor is Zn(2+).

The protein localises to the cytoplasm. In terms of biological role, participates actively in the response to hyperosmotic and heat shock by preventing the aggregation of stress-denatured proteins and by disaggregating proteins, also in an autonomous, DnaK-independent fashion. Unfolded proteins bind initially to DnaJ; upon interaction with the DnaJ-bound protein, DnaK hydrolyzes its bound ATP, resulting in the formation of a stable complex. GrpE releases ADP from DnaK; ATP binding to DnaK triggers the release of the substrate protein, thus completing the reaction cycle. Several rounds of ATP-dependent interactions between DnaJ, DnaK and GrpE are required for fully efficient folding. Also involved, together with DnaK and GrpE, in the DNA replication of plasmids through activation of initiation proteins. The chain is Chaperone protein DnaJ from Roseiflexus sp. (strain RS-1).